Here is a 181-residue protein sequence, read N- to C-terminus: Immunity-related GTPase family M protein (181 aa).

One can recognise an IRG-type G domain in the interval 32 to 181 (TPVNITMAGD…NLQKERVCEY (150 aa)). GTP-binding positions include 41–48 (DSGNGMST), 66–70 (TELVK), and 147–149 (KLD).

This sequence belongs to the TRAFAC class dynamin-like GTPase superfamily. IRG family. Interacts with ULK1; promoting the coassembly of ULK1 and BECN1. Interacts with BECN1; enhancing BECN1-interacting partners and influencing the composition of the BECN1 complex. Interacts with ATG16L1. Interacts with NOD2; promoting IRGM 'Lys-63'-linked polyubiquitination, which is required for interactions with the core autophagy factors. Interacts with STX17; promoting STX17 recruitment to autophagosomes. Interacts with ATG8 proteins (GABARAP, GABARAPL1, GABARAPL2, MAP1LC3A, MAP1LC3B and MAP1LC3C); promoting STX17 recruitment to autophagosomes. Interacts with TFEB; promoting association between TFEB and PPP3CB and TFEB dephosphorylation. Interacts with PPP3CB; promoting association between TFEB and PPP3CB and TFEB dephosphorylation. Interacts with NLRP3; preventing NLRP3 inflammasome assembly and promoting SQSTM1/p62-dependent autophagic degradation of NLRP3. Interacts with CGAS; promoting SQSTM1/p62-dependent autophagic degradation of CGAS. Interacts with RIGI/RIG-I; promoting SQSTM1/p62-dependent autophagic degradation of RIGI/RIG-I. Interacts with NOD1; promoting SQSTM1/p62-dependent autophagic degradation of RIGI/RIG-I. Interacts with NOD2; promoting SQSTM1/p62-dependent autophagic degradation of RIGI/RIG-I. Interacts with RIPK2; promoting SQSTM1/p62-dependent autophagic degradation of RIGI/RIG-I. Ubiquitinated via 'Lys-63'-linked polyubiquitination in a NOD2-dependent process. 'Lys-63'-linked polyubiquitination is required for interactions with the core autophagy factors. As to expression, widely expressed (at protein level). Expressed in several tissues including colon, small bowel and peripheral blood leukocytes.

It is found in the golgi apparatus membrane. It localises to the cell membrane. The protein resides in the cytoplasmic vesicle. The protein localises to the phagosome membrane. Its subcellular location is the autophagosome membrane. It is found in the lysosome membrane. It localises to the late endosome membrane. The protein resides in the mitochondrion membrane. The protein localises to the cell projection. Its subcellular location is the phagocytic cup. It is found in the mitochondrion. It catalyses the reaction GTP + H2O = GDP + phosphate + H(+). Functionally, immunity-related GTPase that plays important roles in innate immunity and inflammatory response. Acts as a dynamin-like protein that binds to intracellular membranes and promotes remodeling and trafficking of those membranes. Required for clearance of acute protozoan and bacterial infections by interacting with autophagy and lysosome regulatory proteins, thereby promoting the fusion of phagosomes with lysosomes for efficient degradation of cargo including microbes. Regulates selective autophagy, including xenophagy and mitophagy, both directly and indirectly. Directly regulates autophagy by acting as a molecular adapter that promotes the coassembly of the core autophagy machinery to mediate antimicrobial defense: IRGM (1) activates AMPK, which in turn phosphorylates ULK1 and BECN1 to induce autophagy, (2) promotes the coassembly of ULK1 and BECN1, enhancing BECN1-interacting partners and (3) influences the composition of the BECN1 complex, by competing with the negative regulators BCL2 and RUBCN, to trigger autophagy. Also activates autophagy by promoting recruitment of STX17 to autophagosomes. In collaboration with ATG8 proteins, regulate lysosomal biogenesis, a fundamental process for any autophagic pathway, by promoting TFEB dephosphorylation. Also modulates autophagy by assisting with autophagosome formation and preventing lysosomal deacidification. While activating autophagy, acts as a key negative regulator of the inflammatory and interferon responses both by (1) promoting mitophagy and (2) mediating autophagy-dependent degradation of effectors of the inflammatory response. Promotes degradation of damaged and IFNG/IFN-gamma-stressed mitochondria via mitophagy, preventing cytosolic release of ligands that activate inflammation. Acts as a suppressor of inflammation by promoting recruitment of inflammation effectors, such as CGAS, RIGI/RIG-I and NLRP3, to autophagosome membranes, leading to their SQSTM1/p62-dependent autophagic degradation. Also directly inhibits assembly of the NLRP3 inflammasome by preventing the association between NLRP3 and PYCARD. Acts as a negative regulator of antiviral innate immune response by suppressing the RIPK2-dependent pro-inflammatory response: mediates recruitment of RIPosomes, composed of RIPK2 and NOD1 or NOD2, to autophagosome membranes, promoting their SQSTM1/p62-dependent autophagic degradation. Acts as a positive regulator of mitophagy in response to intracellular mycobacteria infection: specifically binds cardiolipin, leading to its translocation to mitochondria, where it promotes affected mitochondrial fission and mitophagy. In terms of biological role, (Microbial infection) Following infection by hepatitis C virus (HCV), promotes HCV-triggered membrane remodeling, leading to autophagy and Golgi fragmentation, a step required for HCV replication. The sequence is that of Immunity-related GTPase family M protein from Homo sapiens (Human).